Here is a 463-residue protein sequence, read N- to C-terminus: Argininosuccinate lyase (463 aa).

The protein belongs to the lyase 1 family. Argininosuccinate lyase subfamily.

The protein resides in the cytoplasm. It catalyses the reaction 2-(N(omega)-L-arginino)succinate = fumarate + L-arginine. Its pathway is amino-acid biosynthesis; L-arginine biosynthesis; L-arginine from L-ornithine and carbamoyl phosphate: step 3/3. The sequence is that of Argininosuccinate lyase from Streptococcus pneumoniae (strain 70585).